The primary structure comprises 593 residues: ABC transporter F family member 2 (593 aa).

The span at 1 to 10 (MAKKGGKNNK) shows a compositional bias: basic residues. The segment at 1-25 (MAKKGGKNNKSKKEVTPPTSDVEDE) is disordered. 2 ABC transporter domains span residues 53 to 294 (VKIE…VNQM) and 364 to 583 (MHFD…RDLT). Residues 85-92 (GQNGCGKS) and 399-406 (GPNGAGKS) each bind ATP.

The protein belongs to the ABC transporter superfamily. ABCF family. EF3 subfamily.

This chain is ABC transporter F family member 2 (abcF2), found in Dictyostelium discoideum (Social amoeba).